An 863-amino-acid chain; its full sequence is Nitrate reductase [NADH] (863 aa).

Cysteine 137 is a Mo-molybdopterin binding site. Positions 484-559 (KKYVTKAMLE…LEQFYIAELA (76 aa)) constitute a Cytochrome b5 heme-binding domain. Heme-binding residues include histidine 519 and histidine 542. Positions 602–719 (KKQKAAELKE…KGPIGHFHYD (118 aa)) constitute an FAD-binding FR-type domain. Residues 659 to 662 (RAYT), 676 to 680 (VVKIY), phenylalanine 688, 693 to 695 (KFS), and threonine 746 each bind FAD.

It belongs to the nitrate reductase family. In terms of assembly, homodimer. FAD serves as cofactor. Mo-molybdopterin is required as a cofactor. Requires heme as cofactor.

It catalyses the reaction nitrite + NAD(+) + H2O = nitrate + NADH + H(+). Its function is as follows. Nitrate reductase is a key enzyme involved in the first step of nitrate assimilation in plants, fungi and bacteria. This is Nitrate reductase [NADH] from Ulva prolifera (Green seaweed).